Consider the following 24-residue polypeptide: Brevinin-1JDc (24 aa).

Cysteine 18 and cysteine 24 form a disulfide bridge.

Expressed by the skin glands.

The protein resides in the secreted. Its function is as follows. Has antibacterial activity against E.coli ATCC 25992 (MIC=49 uM), E.coli CIB 84492 (MIC=25 uM), S.aureus ATCC 25923 (MIC=6 uM) and S.aureus CIB 85462 (MIC=3 uM). The polypeptide is Brevinin-1JDc (Odorrana jingdongensis (Jingdong frog)).